Here is a 112-residue protein sequence, read N- to C-terminus: CENP-A recruiting complex protein mis19 (112 aa).

As to quaternary structure, component of the CENP-A recruiting complex composed of at least mis16, mis19, mis19 and mis20.

Its subcellular location is the chromosome. The protein resides in the centromere. It localises to the kinetochore. Functionally, component of the CENP-A recruiting complex that ensures the integrity of mitotic spindles through maintenance of kinetochore factors mis6/CENP-I and cnp1/CENP-A. Links mis16 and mis18 to recruit CENP-A through interacting with non-sense-mediated mRNA decay (NMD) factors and the SWI/SNF complex. Also links mis18 with the CCAN/mis6/ctf19 complex to promote CENP-A assembly. The chain is CENP-A recruiting complex protein mis19 from Schizosaccharomyces pombe (strain 972 / ATCC 24843) (Fission yeast).